The following is a 128-amino-acid chain: Cystatin-12 (128 aa).

The first 21 residues, 1–21 (MLWKSVLSVALIVLGIHDCSF), serve as a signal peptide directing secretion. 2 disulfide bridges follow: Cys-82/Cys-92 and Cys-105/Cys-125. Residue Asn-122 is glycosylated (N-linked (GlcNAc...) asparagine).

This sequence belongs to the cystatin family. Located at the very proximal caput epididymis (at protein level). Expressed in epididymis, Sertoli cells and testis. Also found to be weakly expressed in ovary and prostate.

It localises to the secreted. In terms of biological role, may play a specialized role in spermatogenesis. This chain is Cystatin-12 (Cst12), found in Mus musculus (Mouse).